The chain runs to 444 residues: MITSPTNLNSLPIPPGDFGLPWLGETLNFLNDGDFGKKRQQQFGPIFKTRLFGKNVIFISGALANRFLFTKEQETFQATWPLSTRILLGPNALATQMGEIHRSRRKILYQAFLPRTLDSYLPKMDGIVQGYLEQWGKANEVIWYPQLRRMTFDVAATLFMGEKVSQNPQLFPWFETYIQGLFSLPIPLPNTLFGKSQRARALLLAELEKIIKARQQQPPSEEDALGILLAARDDNNQPLSLPELKDQILLLLFAGHETLTSALSSFCLLLGQHSDIRERVRQEQNKLQLSQELTAETLKKMPYLDQVLQEVLRLIPPVGGGFRELIQDCQFQGFHFPKGWLVSYQISQTHADPDLYPDPEKFDPERFTPDGSATHNPPFAHVPFGGGLRECLGKEFARLEMKLFATRLIQQFDWTLLPGQNLELVVTPSPRPKDNLRVKLHSLM.

Residue cysteine 391 coordinates heme.

It belongs to the cytochrome P450 family. Requires heme as cofactor.

The polypeptide is Putative cytochrome P450 120 (cyp120) (Synechocystis sp. (strain ATCC 27184 / PCC 6803 / Kazusa)).